The following is a 207-amino-acid chain: High frequency lysogenization protein HflD homolog (207 aa).

It belongs to the HflD family.

The protein localises to the cytoplasm. It localises to the cell inner membrane. The sequence is that of High frequency lysogenization protein HflD homolog from Cellvibrio japonicus (strain Ueda107) (Pseudomonas fluorescens subsp. cellulosa).